The chain runs to 307 residues: GTPase Era (307 aa).

In terms of domain architecture, Era-type G spans 14–184 (HSGFVAIVGK…REQILDILPE (171 aa)). The segment at 22-29 (GKPNVGKS) is G1. 22-29 (GKPNVGKS) contributes to the GTP binding site. The interval 48-52 (QTTRR) is G2. The G3 stretch occupies residues 69 to 72 (DTPG). Residues 69 to 73 (DTPGL) and 131 to 134 (NKTD) contribute to the GTP site. Residues 131 to 134 (NKTD) are G4. A G5 region spans residues 162 to 164 (LSA). The 78-residue stretch at 215-292 (LREELPYAVA…FLGLEVIVIP (78 aa)) folds into the KH type-2 domain.

The protein belongs to the TRAFAC class TrmE-Era-EngA-EngB-Septin-like GTPase superfamily. Era GTPase family. Monomer.

The protein resides in the cytoplasm. It is found in the cell membrane. In terms of biological role, an essential GTPase that binds both GDP and GTP, with rapid nucleotide exchange. Plays a role in 16S rRNA processing and 30S ribosomal subunit biogenesis and possibly also in cell cycle regulation and energy metabolism. In Deinococcus deserti (strain DSM 17065 / CIP 109153 / LMG 22923 / VCD115), this protein is GTPase Era.